Here is an 85-residue protein sequence, read N- to C-terminus: Toxin BmKT (85 aa).

The N-terminal stretch at 1–19 (MNYLVFFSLALLLMTGVES) is a signal peptide. The 63-residue stretch at 21-83 (RDGYIADDKN…VPIRVPGKCN (63 aa)) folds into the LCN-type CS-alpha/beta domain. 4 disulfides stabilise this stretch: Cys-31/Cys-82, Cys-35/Cys-55, Cys-41/Cys-65, and Cys-45/Cys-67.

It belongs to the long (4 C-C) scorpion toxin superfamily. Sodium channel inhibitor family. Alpha subfamily. As to expression, expressed by the venom gland.

It localises to the secreted. Functionally, binds to sodium channels (Nav) and inhibits the inactivation of the activated channels, thereby blocking neuronal transmission. Tested on mice, has antitumor effect and strong inhibitory effect on pain. The chain is Toxin BmKT from Olivierus martensii (Manchurian scorpion).